A 92-amino-acid chain; its full sequence is Small ribosomal subunit protein uS19 (92 aa).

Belongs to the universal ribosomal protein uS19 family.

Its function is as follows. Protein S19 forms a complex with S13 that binds strongly to the 16S ribosomal RNA. The sequence is that of Small ribosomal subunit protein uS19 from Cellvibrio japonicus (strain Ueda107) (Pseudomonas fluorescens subsp. cellulosa).